The sequence spans 165 residues: Protein SprT (165 aa).

The SprT-like domain occupies 22–163 (LAQANLKLGR…RCVHCGEQLT (142 aa)). Histidine 78 is a binding site for Zn(2+). Glutamate 79 is an active-site residue. Histidine 82 is a Zn(2+) binding site.

Belongs to the SprT family. It depends on Zn(2+) as a cofactor.

The protein resides in the cytoplasm. In Escherichia fergusonii (strain ATCC 35469 / DSM 13698 / CCUG 18766 / IAM 14443 / JCM 21226 / LMG 7866 / NBRC 102419 / NCTC 12128 / CDC 0568-73), this protein is Protein SprT.